Here is a 300-residue protein sequence, read N- to C-terminus: tRNA dimethylallyltransferase (300 aa).

9–16 provides a ligand contact to ATP; the sequence is GPTASGKT. Residue 11–16 participates in substrate binding; the sequence is TASGKT. An interaction with substrate tRNA region spans residues 34-37; sequence DSQQ.

The protein belongs to the IPP transferase family. As to quaternary structure, monomer. Mg(2+) serves as cofactor.

It carries out the reaction adenosine(37) in tRNA + dimethylallyl diphosphate = N(6)-dimethylallyladenosine(37) in tRNA + diphosphate. Functionally, catalyzes the transfer of a dimethylallyl group onto the adenine at position 37 in tRNAs that read codons beginning with uridine, leading to the formation of N6-(dimethylallyl)adenosine (i(6)A). This Anaeromyxobacter sp. (strain Fw109-5) protein is tRNA dimethylallyltransferase.